The chain runs to 236 residues: Small ribosomal subunit protein uS10m (236 aa).

The N-terminal 24 residues, 1 to 24 (MMRQSIRPLRAFSSEVSWIARRTQ), are a transit peptide targeting the mitochondrion. The disordered stretch occupies residues 29-49 (KPGDLVPNKPEPSKNEQEPRF). A compositionally biased stretch (basic and acidic residues) spans 39–49 (EPSKNEQEPRF).

The protein belongs to the universal ribosomal protein uS10 family. In terms of assembly, part of the mitochondrial small ribosomal subunit.

The protein resides in the mitochondrion. Functionally, involved in mitochondrial genome encoded proteins translation. Involved in the binding of tRNA to the ribosomes. The polypeptide is Small ribosomal subunit protein uS10m (RSM10) (Gibberella zeae (strain ATCC MYA-4620 / CBS 123657 / FGSC 9075 / NRRL 31084 / PH-1) (Wheat head blight fungus)).